The following is a 299-amino-acid chain: Methionyl-tRNA formyltransferase (299 aa).

109-112 (SLLP) contributes to the (6S)-5,6,7,8-tetrahydrofolate binding site.

Belongs to the Fmt family.

The enzyme catalyses L-methionyl-tRNA(fMet) + (6R)-10-formyltetrahydrofolate = N-formyl-L-methionyl-tRNA(fMet) + (6S)-5,6,7,8-tetrahydrofolate + H(+). In terms of biological role, attaches a formyl group to the free amino group of methionyl-tRNA(fMet). The formyl group appears to play a dual role in the initiator identity of N-formylmethionyl-tRNA by promoting its recognition by IF2 and preventing the misappropriation of this tRNA by the elongation apparatus. This Wolbachia pipientis subsp. Culex pipiens (strain wPip) protein is Methionyl-tRNA formyltransferase.